The primary structure comprises 628 residues: Very-long-chain aldehyde decarbonylase GL1-2 (628 aa).

5 consecutive transmembrane segments (helical) span residues glycine 37–leucine 57, glycine 131–histidine 151, valine 191–valine 211, aspartate 299–leucine 319, and phenylalanine 331–serine 351. The region spanning leucine 137–threonine 277 is the Fatty acid hydroxylase domain.

It belongs to the sterol desaturase family. As to quaternary structure, homodimer.

The protein resides in the endoplasmic reticulum membrane. The enzyme catalyses a long-chain fatty aldehyde + 2 NADPH + O2 + H(+) = a long-chain alkane + formate + 2 NADP(+) + H2O. Functionally, aldehyde decarbonylase involved in the conversion of aldehydes to alkanes. Core component of a very-long-chain alkane synthesis complex. The chain is Very-long-chain aldehyde decarbonylase GL1-2 from Oryza sativa subsp. indica (Rice).